The chain runs to 638 residues: Chaperone protein DnaK (638 aa).

The residue at position 200 (threonine 200) is a Phosphothreonine; by autocatalysis. The tract at residues leucine 599 to aspartate 623 is disordered. Residues serine 609 to alanine 620 show a composition bias toward low complexity.

Belongs to the heat shock protein 70 family.

Functionally, acts as a chaperone. This chain is Chaperone protein DnaK, found in Xylella fastidiosa (strain M12).